A 1368-amino-acid polypeptide reads, in one-letter code: DNA-directed RNA polymerase subunit beta (1368 aa).

The protein belongs to the RNA polymerase beta chain family. In terms of assembly, the RNAP catalytic core consists of 2 alpha, 1 beta, 1 beta' and 1 omega subunit. When a sigma factor is associated with the core the holoenzyme is formed, which can initiate transcription.

The enzyme catalyses RNA(n) + a ribonucleoside 5'-triphosphate = RNA(n+1) + diphosphate. In terms of biological role, DNA-dependent RNA polymerase catalyzes the transcription of DNA into RNA using the four ribonucleoside triphosphates as substrates. This Burkholderia pseudomallei (strain K96243) protein is DNA-directed RNA polymerase subunit beta.